We begin with the raw amino-acid sequence, 341 residues long: Holliday junction branch migration complex subunit RuvB (341 aa).

Positions 1–180 (MAKSHTLNPE…FGIQLRLDYY (180 aa)) are large ATPase domain (RuvB-L). 9 residues coordinate ATP: leucine 19, arginine 20, glycine 61, lysine 64, threonine 65, threonine 66, arginine 170, tyrosine 180, and arginine 217. Threonine 65 provides a ligand contact to Mg(2+). Residues 181 to 251 (NDEEMKEIVL…LCLKAFEKMG (71 aa)) form a small ATPAse domain (RuvB-S) region. The segment at 254-341 (DLGLDGMDRQ…ENHGQDPTLF (88 aa)) is head domain (RuvB-H). DNA contacts are provided by arginine 309 and arginine 314.

The protein belongs to the RuvB family. Homohexamer. Forms an RuvA(8)-RuvB(12)-Holliday junction (HJ) complex. HJ DNA is sandwiched between 2 RuvA tetramers; dsDNA enters through RuvA and exits via RuvB. An RuvB hexamer assembles on each DNA strand where it exits the tetramer. Each RuvB hexamer is contacted by two RuvA subunits (via domain III) on 2 adjacent RuvB subunits; this complex drives branch migration. In the full resolvosome a probable DNA-RuvA(4)-RuvB(12)-RuvC(2) complex forms which resolves the HJ.

It localises to the cytoplasm. The enzyme catalyses ATP + H2O = ADP + phosphate + H(+). The RuvA-RuvB-RuvC complex processes Holliday junction (HJ) DNA during genetic recombination and DNA repair, while the RuvA-RuvB complex plays an important role in the rescue of blocked DNA replication forks via replication fork reversal (RFR). RuvA specifically binds to HJ cruciform DNA, conferring on it an open structure. The RuvB hexamer acts as an ATP-dependent pump, pulling dsDNA into and through the RuvAB complex. RuvB forms 2 homohexamers on either side of HJ DNA bound by 1 or 2 RuvA tetramers; 4 subunits per hexamer contact DNA at a time. Coordinated motions by a converter formed by DNA-disengaged RuvB subunits stimulates ATP hydrolysis and nucleotide exchange. Immobilization of the converter enables RuvB to convert the ATP-contained energy into a lever motion, pulling 2 nucleotides of DNA out of the RuvA tetramer per ATP hydrolyzed, thus driving DNA branch migration. The RuvB motors rotate together with the DNA substrate, which together with the progressing nucleotide cycle form the mechanistic basis for DNA recombination by continuous HJ branch migration. Branch migration allows RuvC to scan DNA until it finds its consensus sequence, where it cleaves and resolves cruciform DNA. This Leptospira borgpetersenii serovar Hardjo-bovis (strain JB197) protein is Holliday junction branch migration complex subunit RuvB.